We begin with the raw amino-acid sequence, 127 residues long: Large ribosomal subunit protein bL17 (127 aa).

This sequence belongs to the bacterial ribosomal protein bL17 family. As to quaternary structure, part of the 50S ribosomal subunit. Contacts protein L32.

This chain is Large ribosomal subunit protein bL17, found in Lacticaseibacillus casei (strain BL23) (Lactobacillus casei).